Here is a 200-residue protein sequence, read N- to C-terminus: Small ribosomal subunit protein uS4 (200 aa).

Residues 106–170 (RRLQTIVFKK…SPIANELHPI (65 aa)) enclose the S4 RNA-binding domain. The disordered stretch occupies residues 178-200 (AERVKEEAEKEAAASEDGGEQDE). Positions 179–190 (ERVKEEAEKEAA) are enriched in basic and acidic residues.

This sequence belongs to the universal ribosomal protein uS4 family. Part of the 30S ribosomal subunit. Contacts protein S5. The interaction surface between S4 and S5 is involved in control of translational fidelity.

In terms of biological role, one of the primary rRNA binding proteins, it binds directly to 16S rRNA where it nucleates assembly of the body of the 30S subunit. Its function is as follows. With S5 and S12 plays an important role in translational accuracy. The protein is Small ribosomal subunit protein uS4 of Thermoplasma volcanium (strain ATCC 51530 / DSM 4299 / JCM 9571 / NBRC 15438 / GSS1).